Reading from the N-terminus, the 257-residue chain is MTKVIEALSDWQSIRKTINDLSVGFVPTMGNLHAGHLSLLERSKCENTITVLSLFINPTQFNDKNDFKNYPRTLAQDIAMAEENGIDYVLAPTDDALYPDQYAYKITNSTINNQEAEFRPRHFDGVLTVVMKLLLLVKPTRAYFGEKDYQQLQLVKGLAEAFFLDTEIIGCKIVRNEFGLPLSSRNRRLTEDQYQLAQRFSEIFHSDLSCDEIKNALIQEGIIVDYIEDYNERRFAAVHVGDIRLIDNIPFAKDKKC.

29 to 36 serves as a coordination point for ATP; it reads MGNLHAGH. His-36 serves as the catalytic Proton donor. Gln-60 contacts (R)-pantoate. Residue Gln-60 participates in beta-alanine binding. 145-148 lines the ATP pocket; the sequence is GEKD. Residue Gln-151 coordinates (R)-pantoate. ATP-binding positions include Val-174 and 182-185; that span reads LSSR.

It belongs to the pantothenate synthetase family. In terms of assembly, homodimer.

Its subcellular location is the cytoplasm. The enzyme catalyses (R)-pantoate + beta-alanine + ATP = (R)-pantothenate + AMP + diphosphate + H(+). It functions in the pathway cofactor biosynthesis; (R)-pantothenate biosynthesis; (R)-pantothenate from (R)-pantoate and beta-alanine: step 1/1. Catalyzes the condensation of pantoate with beta-alanine in an ATP-dependent reaction via a pantoyl-adenylate intermediate. This is Pantothenate synthetase from Coxiella burnetii (strain CbuK_Q154) (Coxiella burnetii (strain Q154)).